A 459-amino-acid chain; its full sequence is Argininosuccinate lyase (459 aa).

The protein belongs to the lyase 1 family. Argininosuccinate lyase subfamily.

The protein resides in the cytoplasm. It catalyses the reaction 2-(N(omega)-L-arginino)succinate = fumarate + L-arginine. It functions in the pathway amino-acid biosynthesis; L-arginine biosynthesis; L-arginine from L-ornithine and carbamoyl phosphate: step 3/3. The polypeptide is Argininosuccinate lyase (Staphylococcus aureus (strain MRSA252)).